The sequence spans 95 residues: Large ribosomal subunit protein uL23 (95 aa).

The protein belongs to the universal ribosomal protein uL23 family. Part of the 50S ribosomal subunit. Contacts protein L29, and trigger factor when it is bound to the ribosome.

One of the early assembly proteins it binds 23S rRNA. One of the proteins that surrounds the polypeptide exit tunnel on the outside of the ribosome. Forms the main docking site for trigger factor binding to the ribosome. The chain is Large ribosomal subunit protein uL23 from Leuconostoc mesenteroides subsp. mesenteroides (strain ATCC 8293 / DSM 20343 / BCRC 11652 / CCM 1803 / JCM 6124 / NCDO 523 / NBRC 100496 / NCIMB 8023 / NCTC 12954 / NRRL B-1118 / 37Y).